Consider the following 219-residue polypeptide: Proteasome subunit beta type-9 (219 aa).

A propeptide spans 1–20 (removed in mature form); it reads MLRAGAPTAGSFRTEEVHTG. The Nucleophile role is filled by T21. K53 and K109 each carry N6-acetyllysine.

Belongs to the peptidase T1B family. In terms of assembly, the 26S proteasome consists of a 20S proteasome core and two 19S regulatory subunits. The 20S proteasome core is composed of 28 subunits that are arranged in four stacked rings, resulting in a barrel-shaped structure. The two end rings are each formed by seven alpha subunits, and the two central rings are each formed by seven beta subunits. The catalytic chamber with the active sites is on the inside of the barrel. Component of the immunoproteasome, where it displaces the equivalent housekeeping subunit PSMB6. Component of the spermatoproteasome, a form of the proteasome specifically found in testis. Post-translationally, autocleaved. The resulting N-terminal Thr residue of the mature subunit is responsible for the nucleophile proteolytic activity.

It localises to the cytoplasm. It is found in the nucleus. It carries out the reaction Cleavage of peptide bonds with very broad specificity.. Functionally, the proteasome is a multicatalytic proteinase complex which is characterized by its ability to cleave peptides with Arg, Phe, Tyr, Leu, and Glu adjacent to the leaving group at neutral or slightly basic pH. The proteasome has an ATP-dependent proteolytic activity. This subunit is involved in antigen processing to generate class I binding peptides. In Mus spicilegus (Steppe mouse), this protein is Proteasome subunit beta type-9 (Psmb9).